Reading from the N-terminus, the 187-residue chain is Orotate phosphoribosyltransferase (187 aa).

5-phospho-alpha-D-ribose 1-diphosphate-binding positions include Arg103, Lys104, Lys107, and 129 to 137 (EDVTTSGGS). Orotate is bound by residues Thr133 and Arg161.

The protein belongs to the purine/pyrimidine phosphoribosyltransferase family. PyrE subfamily. In terms of assembly, homodimer. The cofactor is Mg(2+).

It catalyses the reaction orotidine 5'-phosphate + diphosphate = orotate + 5-phospho-alpha-D-ribose 1-diphosphate. Its pathway is pyrimidine metabolism; UMP biosynthesis via de novo pathway; UMP from orotate: step 1/2. Catalyzes the transfer of a ribosyl phosphate group from 5-phosphoribose 1-diphosphate to orotate, leading to the formation of orotidine monophosphate (OMP). The polypeptide is Orotate phosphoribosyltransferase (Methanosarcina mazei (strain ATCC BAA-159 / DSM 3647 / Goe1 / Go1 / JCM 11833 / OCM 88) (Methanosarcina frisia)).